The sequence spans 71 residues: Immune-induced peptide 18 (71 aa).

An N-terminal signal peptide occupies residues 1–24 (MKLIALCCLLLLGLLGFLAAPGVA). Residues 25-26 (SP) constitute a propeptide that is removed on maturation. Positions 26-71 (PSRHTGPGNGSGSGAGSGNPFRSPSSQQRPLYYDAPIGKPSKTMYA) are disordered. A compositionally biased stretch (gly residues) spans 32 to 42 (PGNGSGSGAGS).

Hemolymph (at protein level).

The protein localises to the secreted. The chain is Immune-induced peptide 18 (IM18) from Drosophila melanogaster (Fruit fly).